Reading from the N-terminus, the 261-residue chain is Succinate dehydrogenase iron-sulfur subunit (261 aa).

The interval 1-23 is disordered; the sequence is MAELRLPPNSVVKKGKEHKEQEE. Positions 28 to 119 constitute a 2Fe-2S ferredoxin-type domain; it reads RKVKIYRYDP…DIKIYPLPHM (92 aa). 3 residues coordinate [2Fe-2S] cluster: Cys-80, Cys-85, and Cys-100. Residues 161–191 form the 4Fe-4S ferredoxin-type domain; sequence GREKLDGLYECILCACCSTSCPSYWWNGDKY. Residues Cys-171, Cys-174, and Cys-177 each contribute to the [4Fe-4S] cluster site. A [3Fe-4S] cluster-binding site is contributed by Cys-181. Trp-186 is an a ubiquinone binding site. 2 residues coordinate [3Fe-4S] cluster: Cys-228 and Cys-234. Residue Cys-238 coordinates [4Fe-4S] cluster.

It belongs to the succinate dehydrogenase/fumarate reductase iron-sulfur protein family. Part of an enzyme complex containing four subunits: a flavoprotein, an iron-sulfur, cytochrome b-556, and a hydrophobic anchor protein. The cofactor is [2Fe-2S] cluster. [3Fe-4S] cluster serves as cofactor. It depends on [4Fe-4S] cluster as a cofactor.

It carries out the reaction a quinone + succinate = fumarate + a quinol. It participates in carbohydrate metabolism; tricarboxylic acid cycle; fumarate from succinate (bacterial route): step 1/1. The polypeptide is Succinate dehydrogenase iron-sulfur subunit (sdhB) (Rickettsia felis (strain ATCC VR-1525 / URRWXCal2) (Rickettsia azadi)).